We begin with the raw amino-acid sequence, 420 residues long: Heterogeneous nuclear ribonucleoprotein D-like (420 aa).

Disordered regions lie at residues 1–83 (MEVP…RRRP) and 96–120 (QRSA…SVTM). At R25 the chain carries Omega-N-methylarginine. The span at 36–52 (RQLAPLLPSLAPSSARQ) shows a compositional bias: low complexity. RRM domains lie at 148–230 (GKMF…KGKE) and 233–312 (KKVF…QPKE). Position 161 is an N6-methyllysine (K161). K209 participates in a covalent cross-link: Glycyl lysine isopeptide (Lys-Gly) (interchain with G-Cter in SUMO2). An N6-acetyllysine modification is found at K216. The residue at position 241 (S241) is a Phosphoserine. Disordered stretches follow at residues 313-348 (VYRQ…NWNQ) and 398-420 (GQQS…YQPY). A compositionally biased stretch (gly residues) spans 323 to 342 (GGRGAAAGGRGGTRGRGRGQ). The segment at 342-420 (QGQNWNQGFN…GNHQNNYQPY (79 aa)) is necessary for interaction with TNPO1. The tract at residues 396 to 420 (YSGQQSTYGKASRGGGNHQNNYQPY) is necessary for its nuclear import and export. R408 is modified (dimethylated arginine; alternate). Position 408 is an omega-N-methylarginine; alternate (R408).

In terms of assembly, interacts with ZNF148. Interacts with TNPO1. Post-translationally, dimethylation of Arg-408 is probably of the asymmetric type. As to expression, expressed in heart, brain, placenta, lung, liver, skeletal muscle, kidney, pancreas, spleen, thymus, prostate, testis, ovary, small intestine, colon and leukocytes. Expressed in myeloid leukemia, gastric adenocarcinoma, cervical carcinoma, hepatoma, fibrosarcoma, colon adenocarcinoma, epidermoid carcinoma, osteosarcoma and urinary bladder carcinoma cells.

The protein localises to the nucleus. It localises to the cytoplasm. Its function is as follows. Acts as a transcriptional regulator. Promotes transcription repression. Promotes transcription activation in differentiated myotubes. Binds to double- and single-stranded DNA sequences. Binds to the transcription suppressor CATR sequence of the COX5B promoter. Binds with high affinity to RNA molecules that contain AU-rich elements (AREs) found within the 3'-UTR of many proto-oncogenes and cytokine mRNAs. Binds both to nuclear and cytoplasmic poly(A) mRNAs. Binds to poly(G) and poly(A), but not to poly(U) or poly(C) RNA homopolymers. Binds to the 5'-ACUAGC-3' RNA consensus sequence. The sequence is that of Heterogeneous nuclear ribonucleoprotein D-like (HNRNPDL) from Homo sapiens (Human).